A 251-amino-acid chain; its full sequence is 3-deoxy-manno-octulosonate cytidylyltransferase (251 aa).

This sequence belongs to the KdsB family.

It is found in the cytoplasm. The enzyme catalyses 3-deoxy-alpha-D-manno-oct-2-ulosonate + CTP = CMP-3-deoxy-beta-D-manno-octulosonate + diphosphate. The protein operates within nucleotide-sugar biosynthesis; CMP-3-deoxy-D-manno-octulosonate biosynthesis; CMP-3-deoxy-D-manno-octulosonate from 3-deoxy-D-manno-octulosonate and CTP: step 1/1. Its pathway is bacterial outer membrane biogenesis; lipopolysaccharide biosynthesis. Functionally, activates KDO (a required 8-carbon sugar) for incorporation into bacterial lipopolysaccharide in Gram-negative bacteria. The chain is 3-deoxy-manno-octulosonate cytidylyltransferase from Rhizobium etli (strain ATCC 51251 / DSM 11541 / JCM 21823 / NBRC 15573 / CFN 42).